We begin with the raw amino-acid sequence, 181 residues long: Ribosome-recycling factor (181 aa).

The segment at 135–160 (MDDIKKDKDMPEDDARKAEDQTQKLT) is disordered.

This sequence belongs to the RRF family.

It localises to the cytoplasm. In terms of biological role, responsible for the release of ribosomes from messenger RNA at the termination of protein biosynthesis. May increase the efficiency of translation by recycling ribosomes from one round of translation to another. This chain is Ribosome-recycling factor, found in Leuconostoc mesenteroides subsp. mesenteroides (strain ATCC 8293 / DSM 20343 / BCRC 11652 / CCM 1803 / JCM 6124 / NCDO 523 / NBRC 100496 / NCIMB 8023 / NCTC 12954 / NRRL B-1118 / 37Y).